A 968-amino-acid chain; its full sequence is RNA polymerase-associated protein RapA (968 aa).

The Helicase ATP-binding domain maps to 164–334 (DVGRRHAPRV…FARLRLLDPN (171 aa)). 177-184 (DEVGLGKT) is an ATP binding site. Positions 280–283 (DEAH) match the DEAH box motif. In terms of domain architecture, Helicase C-terminal spans 490-644 (RVEWLMGYLT…TCPTGRTIYD (155 aa)).

It belongs to the SNF2/RAD54 helicase family. RapA subfamily. In terms of assembly, interacts with the RNAP. Has a higher affinity for the core RNAP than for the holoenzyme. Its ATPase activity is stimulated by binding to RNAP.

Functionally, transcription regulator that activates transcription by stimulating RNA polymerase (RNAP) recycling in case of stress conditions such as supercoiled DNA or high salt concentrations. Probably acts by releasing the RNAP, when it is trapped or immobilized on tightly supercoiled DNA. Does not activate transcription on linear DNA. Probably not involved in DNA repair. This chain is RNA polymerase-associated protein RapA, found in Enterobacter sp. (strain 638).